We begin with the raw amino-acid sequence, 505 residues long: Histidine ammonia-lyase (505 aa).

Residues 141 to 143 constitute a cross-link (5-imidazolinone (Ala-Gly)); sequence ASG. The residue at position 142 (serine 142) is a 2,3-didehydroalanine (Ser).

Belongs to the PAL/histidase family. In terms of processing, contains an active site 4-methylidene-imidazol-5-one (MIO), which is formed autocatalytically by cyclization and dehydration of residues Ala-Ser-Gly.

The protein resides in the cytoplasm. It carries out the reaction L-histidine = trans-urocanate + NH4(+). Its pathway is amino-acid degradation; L-histidine degradation into L-glutamate; N-formimidoyl-L-glutamate from L-histidine: step 1/3. This is Histidine ammonia-lyase from Bacillus cytotoxicus (strain DSM 22905 / CIP 110041 / 391-98 / NVH 391-98).